Here is a 269-residue protein sequence, read N- to C-terminus: Expansin-B11 (269 aa).

The first 30 residues, 1–30 (MTVVSIMWSLVQVQVLVAVALAFLVGGAWC), serve as a signal peptide directing secretion. Asn-40 is a glycosylation site (N-linked (GlcNAc...) asparagine). The Expansin-like EG45 domain occupies 69–175 (GGGCGYKDVN…RRVKCKYGSK (107 aa)). 3 disulfide bridges follow: Cys-72–Cys-100, Cys-103–Cys-170, and Cys-108–Cys-114. The region spanning 187-268 (NYLALLVKYV…GWKPNTAYTA (82 aa)) is the Expansin-like CBD domain.

It belongs to the expansin family. Expansin B subfamily. In terms of tissue distribution, expressed in pollen.

Its subcellular location is the secreted. The protein localises to the cell wall. It localises to the membrane. In terms of biological role, may aid fertilization by loosening the cell wall of the stigma and style, thereby facilitating penetration of the pollen tube. Acts selectively on grass cell walls, which are relatively poor in pectins and xyloglucans and rich in glucuronoarabinoxylans and (1-3),(1-4)-beta-D-glucans, when compared with cell walls of other angiosperms, including other monocots. This Zea mays (Maize) protein is Expansin-B11 (EXPB11).